The chain runs to 448 residues: Proline iminopeptidase aneH (448 aa).

An AB hydrolase-1 domain is found at 64–191; it reads PWMLYLQGGP…VEVFIGGGPC (128 aa). The active-site Nucleophile is the Ser-164. Asp-397 is an active-site residue. The active-site Proton donor is the His-425.

This sequence belongs to the peptidase S33 family. In terms of assembly, homooligomer.

The protein resides in the cytoplasm. The catalysed reaction is Release of N-terminal proline from a peptide.. The protein operates within secondary metabolite biosynthesis. Its function is as follows. Proline iminopeptidase; part of the gene cluster that mediates the biosynthesis of aculenes, a unique type of norsesquiterpenes that contain a nordaucane skeleton linked to an L-proline moiety and are of mixed biosynthetic origin. The pathway begins with the synthesis of dauca-4,7-diene by the terpene cyclase aneC using farnesyl pyrophosphate (FPP) as substrate. The cytochrome P450 monooxygenase aneF then performs the initial oxidation at C-12 of dauca-4,7-diene to yield asperaculane D. Asperaculane D is substrate of the cytochrome P450 monooxygenase aneD for C-10 hydroxylation to yield asperaculane E. The cytochrome P450 monooxygenase aneG then converts asperaculane E into aculene D via C-2 oxidation. The monomodular nonribosomal peptide synthtase aneB adenylates L-proline and the thiohydrolase aneE transfers this activated L-proline derivative to aculenes D and C to produce respectively aculenes B and A. The dioxygenase aneA converts aculene D into aculene C, and aculene B into aculene A by introducing the 5,6-alkene moiety. Asperculanes A, B, C and F, as well as 14-prolyl asperculane C, might be shunt products of the pathway. The polypeptide is Proline iminopeptidase aneH (Aspergillus aculeatus (strain ATCC 16872 / CBS 172.66 / WB 5094)).